Here is a 687-residue protein sequence, read N- to C-terminus: Protein 4.2 (687 aa).

Gly-2 is lipidated: N-myristoyl glycine. The segment at 31 to 39 is band 3 binding; sequence LFVRRGQPF. The residue at position 247 (Ser-247) is a Phosphoserine.

This sequence belongs to the transglutaminase superfamily. Transglutaminase family. In terms of assembly, component of the ankyrin-1 complex in the erythrocyte, composed of ANK1, RHCE, RHAG, SLC4A1, EPB42, GYPA, GYPB and AQP1. Interacts with SLC4A1 (via the cytoplasmic domain); this interaction is mediated by the SLC4A1 Band 3-I dimer. Interacts with ANK1 (via ANK 1-13 repeats). Interacts with AQP1 (via the C-terminal).

It localises to the cell membrane. It is found in the cytoplasm. The protein resides in the cytoskeleton. Functionally, component of the ankyrin-1 complex, a multiprotein complex involved in the stability and shape of the erythrocyte membrane. The sequence is that of Protein 4.2 from Bos taurus (Bovine).